Reading from the N-terminus, the 440-residue chain is tRNA-2-methylthio-N(6)-dimethylallyladenosine synthase (440 aa).

Residues 4-120 enclose the MTTase N-terminal domain; the sequence is NYVYIETFGC…LNDMVLAAER (117 aa). C13, C49, C83, C158, C162, and C165 together coordinate [4Fe-4S] cluster. Residues 144–374 form the Radical SAM core domain; the sequence is GTARISSFVT…QALQKRTTME (231 aa). The region spanning 377–439 is the TRAM domain; it reads DVLLGTRQTV…QNSLLGELLP (63 aa).

Belongs to the methylthiotransferase family. MiaB subfamily. Monomer. The cofactor is [4Fe-4S] cluster.

The protein resides in the cytoplasm. The catalysed reaction is N(6)-dimethylallyladenosine(37) in tRNA + (sulfur carrier)-SH + AH2 + 2 S-adenosyl-L-methionine = 2-methylsulfanyl-N(6)-dimethylallyladenosine(37) in tRNA + (sulfur carrier)-H + 5'-deoxyadenosine + L-methionine + A + S-adenosyl-L-homocysteine + 2 H(+). Functionally, catalyzes the methylthiolation of N6-(dimethylallyl)adenosine (i(6)A), leading to the formation of 2-methylthio-N6-(dimethylallyl)adenosine (ms(2)i(6)A) at position 37 in tRNAs that read codons beginning with uridine. The chain is tRNA-2-methylthio-N(6)-dimethylallyladenosine synthase from Pelobacter propionicus (strain DSM 2379 / NBRC 103807 / OttBd1).